The primary structure comprises 780 residues: Striatin (780 aa).

A coiled-coil region spans residues Leu53–Lys120. The interval Phe55–Phe63 is caveolin-binding. A disordered region spans residues Glu124 to Val145. Ser137 carries the phosphoserine modification. The calmodulin-binding stretch occupies residues Gln149 to Leu166. Phosphothreonine is present on Thr225. Residues Ser227, Ser229, Ser245, and Ser259 each carry the phosphoserine modification. Disordered regions lie at residues Phe290–Arg321, Glu334–Lys353, and Asp363–Gln388. A compositionally biased stretch (basic and acidic residues) spans Asn299–Gln315. Residues Lys338–Arg351 are compositionally biased toward basic residues. WD repeat units lie at residues Ser461–Lys500, Ala514–Tyr553, Gly567–Thr606, Ser662–Ser701, Ala704–Glu743, and Lys750–Val780.

The protein belongs to the WD repeat striatin family. Part of the core of STRIPAK complexes composed of PP2A catalytic and scaffolding subunits, the striatins (PP2A regulatory subunits), the striatin-associated proteins MOB4, STRIP1 and STRIP2, PDCD10 and members of the STE20 kinases, such as STK24 and STK26. Interacts with CTTNBP2; this interaction may regulate dendritic spine distribution of STRN. Activation of glutamate receptors weakens the interaction with CTTNBP2. As to expression, mainly expressed in the central nervous system. Mostly confined in dendrites, not in axons, and is most abundant in dendritic spines.

It localises to the cytoplasm. It is found in the membrane. Its subcellular location is the cell projection. The protein localises to the dendritic spine. Functionally, calmodulin-binding scaffolding protein which is the center of the striatin-interacting phosphatase and kinase (STRIPAK) complexes. STRIPAK complexes have critical roles in protein (de)phosphorylation and are regulators of multiple signaling pathways including Hippo, MAPK, nuclear receptor and cytoskeleton remodeling. Different types of STRIPAK complexes are involved in a variety of biological processes such as cell growth, differentiation, apoptosis, metabolism and immune regulation. The protein is Striatin (Strn) of Rattus norvegicus (Rat).